Reading from the N-terminus, the 424-residue chain is Isoflavipucine cluster transcription factor ATEG_00326 (424 aa).

The zn(2)-C6 fungal-type DNA-binding region spans 10-38 (CDRCHGQKLRCIHSGGGPCVRCAKAKATC). The tract at residues 265–286 (ARMQTPEGTPERTSESSPSGPP) is disordered.

Its subcellular location is the nucleus. Transcription factor that regulates the expression of the gene cluster that mediates the biosynthesis of isoflavipucine. This chain is Isoflavipucine cluster transcription factor ATEG_00326, found in Aspergillus terreus (strain NIH 2624 / FGSC A1156).